Here is a 152-residue protein sequence, read N- to C-terminus: Ribonuclease H (152 aa).

The RNase H type-1 domain maps to Met-1–Glu-142. Residues Asp-10, Glu-48, Asp-70, and Asp-134 each contribute to the Mg(2+) site.

Belongs to the RNase H family. As to quaternary structure, monomer. The cofactor is Mg(2+).

The protein localises to the cytoplasm. The catalysed reaction is Endonucleolytic cleavage to 5'-phosphomonoester.. Its function is as follows. Endonuclease that specifically degrades the RNA of RNA-DNA hybrids. The chain is Ribonuclease H from Rickettsia felis (strain ATCC VR-1525 / URRWXCal2) (Rickettsia azadi).